The sequence spans 396 residues: S-adenosylmethionine synthase (396 aa).

His-16 lines the ATP pocket. Asp-18 contacts Mg(2+). Glu-44 is a K(+) binding site. L-methionine is bound by residues Glu-57 and Gln-100. Residues 100–110 (QSVDINQGVDR) are flexible loop. ATP is bound by residues 165-167 (DAK), Asp-240, 246-247 (RK), Ala-263, and Lys-267. Asp-240 contacts L-methionine. Lys-271 serves as a coordination point for L-methionine.

This sequence belongs to the AdoMet synthase family. In terms of assembly, homotetramer; dimer of dimers. It depends on Mg(2+) as a cofactor. The cofactor is K(+).

It is found in the cytoplasm. The enzyme catalyses L-methionine + ATP + H2O = S-adenosyl-L-methionine + phosphate + diphosphate. Its pathway is amino-acid biosynthesis; S-adenosyl-L-methionine biosynthesis; S-adenosyl-L-methionine from L-methionine: step 1/1. Catalyzes the formation of S-adenosylmethionine (AdoMet) from methionine and ATP. The overall synthetic reaction is composed of two sequential steps, AdoMet formation and the subsequent tripolyphosphate hydrolysis which occurs prior to release of AdoMet from the enzyme. The sequence is that of S-adenosylmethionine synthase from Pseudomonas aeruginosa (strain UCBPP-PA14).